Here is a 229-residue protein sequence, read N- to C-terminus: Protein FAM3C (229 aa).

Positions 1-24 (MRIAGAIKFVIAVALFLLTFYVIS) are cleaved as a signal peptide. Intrachain disulfides connect cysteine 59/cysteine 87 and cysteine 65/cysteine 222. The GG-type lectin domain occupies 68–226 (KHFAFKIASG…VEMEGCIPQK (159 aa)).

This sequence belongs to the FAM3 family.

Its subcellular location is the secreted. Its function is as follows. Involved in retinal laminar formation. In Xenopus tropicalis (Western clawed frog), this protein is Protein FAM3C (fam3c).